The primary structure comprises 233 residues: Small ribosomal subunit protein uS2 (233 aa).

It belongs to the universal ribosomal protein uS2 family.

The protein is Small ribosomal subunit protein uS2 of Clostridium botulinum (strain Eklund 17B / Type B).